Here is a 435-residue protein sequence, read N- to C-terminus: GTPase Der (435 aa).

EngA-type G domains lie at 3–168 (PTVA…PEDD) and 176–351 (VKLT…QNRR). Residues 9 to 16 (GRPNVGKS), 56 to 60 (DTGGY), 120 to 123 (NKVD), 182 to 189 (GRPNVGKS), 229 to 233 (DTAGL), and 294 to 297 (NKWD) contribute to the GTP site. The KH-like domain occupies 352 to 435 (MKIDTSRLNN…TPIELKFRRK (84 aa)).

It belongs to the TRAFAC class TrmE-Era-EngA-EngB-Septin-like GTPase superfamily. EngA (Der) GTPase family. As to quaternary structure, associates with the 50S ribosomal subunit.

In terms of biological role, GTPase that plays an essential role in the late steps of ribosome biogenesis. In Chloroherpeton thalassium (strain ATCC 35110 / GB-78), this protein is GTPase Der.